A 154-amino-acid polypeptide reads, in one-letter code: uncharacterized protein (154 aa).

This is an uncharacterized protein from Archaeoglobus fulgidus (strain ATCC 49558 / DSM 4304 / JCM 9628 / NBRC 100126 / VC-16).